Consider the following 576-residue polypeptide: Lysine--tRNA ligase (576 aa).

Mg(2+)-binding residues include Glu413 and Glu420.

The protein belongs to the class-II aminoacyl-tRNA synthetase family. In terms of assembly, homodimer. Mg(2+) serves as cofactor.

The protein localises to the cytoplasm. It catalyses the reaction tRNA(Lys) + L-lysine + ATP = L-lysyl-tRNA(Lys) + AMP + diphosphate. This Bacteroides thetaiotaomicron (strain ATCC 29148 / DSM 2079 / JCM 5827 / CCUG 10774 / NCTC 10582 / VPI-5482 / E50) protein is Lysine--tRNA ligase.